The sequence spans 243 residues: Max-interacting protein 1 (243 aa).

The 53-residue stretch at 76–128 folds into the bHLH domain; sequence HYRSTHNELEKNRRAHLRLCLERLKTLIPLGPECSRHTTLGLLNKAKAHIKKL. Residues 164–235 are disordered; the sequence is EAERIRTDSM…TASDEGYSSC (72 aa). Acidic residues predominate over residues 188 to 198; that stretch reads DQEEMEVDVES. Residues 222 to 235 are compositionally biased toward polar residues; that stretch reads SLQSTASDEGYSSC.

In terms of assembly, efficient DNA binding requires dimerization with another bHLH protein. Binds DNA as a heterodimer with MAX.

Its subcellular location is the nucleus. In terms of biological role, transcriptional repressor. MXI1 binds with MAX to form a sequence-specific DNA-binding protein complex which recognizes the core sequence 5'-CAC[GA]TG-3'. MXI1 thus antagonizes MYC transcriptional activity by competing for MAX. The protein is Max-interacting protein 1 (mxi1) of Danio rerio (Zebrafish).